Here is a 440-residue protein sequence, read N- to C-terminus: tRNA modification GTPase MnmE (440 aa).

Residues arginine 22, glutamate 79, and lysine 118 each contribute to the (6S)-5-formyl-5,6,7,8-tetrahydrofolate site. A TrmE-type G domain is found at 214 to 366; sequence GLIFTILGKP…LKTMLEAEAR (153 aa). GTP contacts are provided by residues 224–229, 243–249, and 268–271; these read NAGKSS, SSQPGTT, and DTAG. The Mg(2+) site is built by serine 228 and threonine 249. (6S)-5-formyl-5,6,7,8-tetrahydrofolate is bound at residue lysine 440.

It belongs to the TRAFAC class TrmE-Era-EngA-EngB-Septin-like GTPase superfamily. TrmE GTPase family. Homodimer. Heterotetramer of two MnmE and two MnmG subunits. It depends on K(+) as a cofactor.

It localises to the cytoplasm. Its function is as follows. Exhibits a very high intrinsic GTPase hydrolysis rate. Involved in the addition of a carboxymethylaminomethyl (cmnm) group at the wobble position (U34) of certain tRNAs, forming tRNA-cmnm(5)s(2)U34. This is tRNA modification GTPase MnmE from Granulibacter bethesdensis (strain ATCC BAA-1260 / CGDNIH1).